Here is a 113-residue protein sequence, read N- to C-terminus: MLILKRIFIIRNFIFPFSNCRYASTVPSPRSGISNTNDFFKRIGRDTAEKVNGKFESWDGLFRKSTKTMKKEGIDVRTRKYIASQRNRFKEGFIVKPYPVMVKKNGGERRKRK.

The N-terminal 22 residues, 1-22, are a transit peptide targeting the mitochondrion; the sequence is MLILKRIFIIRNFIFPFSNCRY.

It belongs to the mitochondrion-specific ribosomal protein mS41 family. In terms of assembly, component of the mitochondrial small ribosomal subunit (mt-SSU). Mature yeast 74S mitochondrial ribosomes consist of a small (37S) and a large (54S) subunit. The 37S small subunit contains a 15S ribosomal RNA (15S mt-rRNA) and at least 32 different proteins. The 54S large subunit contains a 21S rRNA (21S mt-rRNA) and at least 45 different proteins.

It is found in the mitochondrion. In terms of biological role, component of the mitochondrial ribosome (mitoribosome), a dedicated translation machinery responsible for the synthesis of mitochondrial genome-encoded proteins, including at least some of the essential transmembrane subunits of the mitochondrial respiratory chain. The mitoribosomes are attached to the mitochondrial inner membrane and translation products are cotranslationally integrated into the membrane. mS41 is involved in telomere length regulation. This is Small ribosomal subunit protein mS41 (fyv4) from Schizosaccharomyces pombe (strain 972 / ATCC 24843) (Fission yeast).